A 554-amino-acid polypeptide reads, in one-letter code: Trichloroethene reductive dehalogenase (554 aa).

Positions 1–42 (MSEKYHSTVTRRDFMKRLGLAGAGAGALGAAVLAENNLPHEF) form a signal peptide, tat-type signal. 4Fe-4S ferredoxin-type domains lie at 425 to 457 (PTKP…HEGP) and 471 to 500 (EGWH…NNSW). [4Fe-4S] cluster-binding residues include cysteine 437, cysteine 440, cysteine 443, cysteine 447, cysteine 480, cysteine 483, cysteine 486, and cysteine 490.

Belongs to the PceA family. The cofactor is [4Fe-4S] cluster. Requires corrinoid as cofactor. In terms of processing, predicted to be exported by the Tat system. The position of the signal peptide cleavage has been experimentally proven.

The protein localises to the cell membrane. It catalyses the reaction trichloroethene + AH2 = (Z)-1,2-dichloroethene + chloride + A + H(+). It carries out the reaction (Z)-1,2-dichloroethene + AH2 = chloroethene + chloride + A + H(+). The catalysed reaction is 1,1-dichloroethene + AH2 = chloroethene + chloride + A + H(+). With respect to regulation, loses 93% of its activity upon incubation with 1-iodopropane and titanium(III) citrate in the dark. Subsequent exposure to light restores 80% of the original activity. Completely inhibited by 2 mM sodium sulfite or sodium dithionite, and by 1 mM cuprous chloride. Catalyzes the reductive dechlorination of trichloroethene (TCE) to cis-1,2-dichloroethene (DCE) and of cis-1,2-dichloroethene to chloroethene. The substrate specificity is broad, and the enzyme can dehalogenate various substrates, including 1,1-dichloroethene (1,1-DCE), 1,2-dichloroethane and 1,2-dibromoethane. A variety of other haloalkanes and haloalkenes containing three to five carbon atoms are dehalogenated at lower rates. Trans-1,2-dichloroethene (trans-DCE) and chloroethene are degraded at rates which are approximately 2 orders of magnitude lower. Titanium(III) citrate and methyl viologen can be used as reductants. This is Trichloroethene reductive dehalogenase from Dehalococcoides mccartyi (strain ATCC BAA-2266 / KCTC 15142 / 195) (Dehalococcoides ethenogenes (strain 195)).